The chain runs to 409 residues: Putative lipoate-protein ligase A (409 aa).

The BPL/LPL catalytic domain maps to 146–330 (GPDNCRLVFY…RFQKTFKVDG (185 aa)). ATP-binding positions include Arg188, 193–196 (GTVL), and Lys249. Residue Lys249 coordinates (R)-lipoate.

The protein belongs to the LplA family. As to quaternary structure, monomer.

The catalysed reaction is L-lysyl-[lipoyl-carrier protein] + (R)-lipoate + ATP = N(6)-[(R)-lipoyl]-L-lysyl-[lipoyl-carrier protein] + AMP + diphosphate + H(+). The protein operates within protein modification; protein lipoylation via exogenous pathway; protein N(6)-(lipoyl)lysine from lipoate: step 1/2. It functions in the pathway protein modification; protein lipoylation via exogenous pathway; protein N(6)-(lipoyl)lysine from lipoate: step 2/2. Catalyzes both the ATP-dependent activation of exogenously supplied lipoate to lipoyl-AMP and the transfer of the activated lipoyl onto the lipoyl domains of lipoate-dependent enzymes. This Saccharomyces cerevisiae (strain YJM789) (Baker's yeast) protein is Putative lipoate-protein ligase A (AIM22).